The chain runs to 166 residues: uncharacterized protein (166 aa).

A run of 3 helical transmembrane segments spans residues 4–24 (LNIF…EASI), 101–121 (LITC…SEAI), and 146–166 (SWSS…QCFL).

The protein localises to the membrane. This is an uncharacterized protein from Saccharomyces cerevisiae (strain ATCC 204508 / S288c) (Baker's yeast).